A 453-amino-acid chain; its full sequence is Adenylyltransferase and sulfurtransferase MOCS3 (453 aa).

T62 carries the post-translational modification Phosphothreonine. Residues G101, D122, 129-133 (SNFHR), K146, and 190-191 (DN) contribute to the ATP site. Zn(2+)-binding residues include C231 and C234. C248 functions as the Glycyl thioester intermediate; for adenylyltransferase activity in the catalytic mechanism. Zn(2+)-binding residues include C306 and C309. Residues 355–451 (QAKPHLLIDV…WTSNIDPNFP (97 aa)) enclose the Rhodanese domain. C410 (cysteine persulfide intermediate; for sulfurtransferase activity) is an active-site residue.

It in the N-terminal section; belongs to the HesA/MoeB/ThiF family. UBA4 subfamily. Zn(2+) serves as cofactor.

The protein resides in the cytoplasm. It localises to the cytosol. It catalyses the reaction [molybdopterin-synthase sulfur-carrier protein]-C-terminal Gly-Gly + ATP + H(+) = [molybdopterin-synthase sulfur-carrier protein]-C-terminal Gly-Gly-AMP + diphosphate. The enzyme catalyses [molybdopterin-synthase sulfur-carrier protein]-C-terminal Gly-Gly-AMP + S-sulfanyl-L-cysteinyl-[cysteine desulfurase] + AH2 = [molybdopterin-synthase sulfur-carrier protein]-C-terminal-Gly-aminoethanethioate + L-cysteinyl-[cysteine desulfurase] + A + AMP + 2 H(+). It functions in the pathway tRNA modification; 5-methoxycarbonylmethyl-2-thiouridine-tRNA biosynthesis. It participates in cofactor biosynthesis; molybdopterin biosynthesis. In terms of biological role, plays a central role in 2-thiolation of mcm(5)S(2)U at tRNA wobble positions of cytosolic tRNA(Lys), tRNA(Glu) and tRNA(Gln). Also essential during biosynthesis of the molybdenum cofactor. Acts by mediating the C-terminal thiocarboxylation of sulfur carriers URM1 and MOCS2A. Its N-terminus first activates URM1 and MOCS2A as acyl-adenylates (-COAMP), then the persulfide sulfur on the catalytic cysteine is transferred to URM1 and MOCS2A to form thiocarboxylation (-COSH) of their C-terminus. The reaction probably involves hydrogen sulfide that is generated from the persulfide intermediate and that acts as a nucleophile towards URM1 and MOCS2A. Subsequently, a transient disulfide bond is formed. Does not use thiosulfate as sulfur donor; NFS1 probably acting as a sulfur donor for thiocarboxylation reactions. The chain is Adenylyltransferase and sulfurtransferase MOCS3 from Drosophila sechellia (Fruit fly).